Here is a 150-residue protein sequence, read N- to C-terminus: MIKVKIVRLKEKASLPAYATAHAAGMDVSACLDAPVTLEPSSSALIPTGLAIELPEGYEAQLRPRSGLALRHLISLPNSPATIDADYRGEVGVILINHGREPFTVNHGDRIAQMVVSKVDRVAFEEVDSLSDTERGEGGFGHTGVASKAE.

Residues 65-67 (RSG), Asn78, and 82-84 (TID) contribute to the substrate site. Residues 130-150 (LSDTERGEGGFGHTGVASKAE) are disordered.

This sequence belongs to the dUTPase family. It depends on Mg(2+) as a cofactor.

It carries out the reaction dUTP + H2O = dUMP + diphosphate + H(+). It functions in the pathway pyrimidine metabolism; dUMP biosynthesis; dUMP from dCTP (dUTP route): step 2/2. In terms of biological role, this enzyme is involved in nucleotide metabolism: it produces dUMP, the immediate precursor of thymidine nucleotides and it decreases the intracellular concentration of dUTP so that uracil cannot be incorporated into DNA. The chain is Deoxyuridine 5'-triphosphate nucleotidohydrolase from Chlorobaculum parvum (strain DSM 263 / NCIMB 8327) (Chlorobium vibrioforme subsp. thiosulfatophilum).